Here is a 295-residue protein sequence, read N- to C-terminus: ATP synthase gamma chain (295 aa).

The protein belongs to the ATPase gamma chain family. In terms of assembly, F-type ATPases have 2 components, CF(1) - the catalytic core - and CF(0) - the membrane proton channel. CF(1) has five subunits: alpha(3), beta(3), gamma(1), delta(1), epsilon(1). CF(0) has three main subunits: a, b and c.

It localises to the cell inner membrane. In terms of biological role, produces ATP from ADP in the presence of a proton gradient across the membrane. The gamma chain is believed to be important in regulating ATPase activity and the flow of protons through the CF(0) complex. The protein is ATP synthase gamma chain of Maricaulis maris (strain MCS10) (Caulobacter maris).